The chain runs to 597 residues: uncharacterized protein (597 aa).

The next 5 helical transmembrane spans lie at 37-57 (VLII…LWPV), 67-87 (IFWL…LQFA), 109-129 (GGER…YAAI), 134-154 (SVSL…FIAW), and 162-182 (ALMT…LAIV). One can recognise a Histidine kinase domain in the interval 393–597 (HQLARDLHDG…QITIFVPIES (205 aa)).

It is found in the cell membrane. This is an uncharacterized protein from Chloroflexus aurantiacus (strain ATCC 29366 / DSM 635 / J-10-fl).